The following is a 151-amino-acid chain: Large ribosomal subunit protein eL19 (151 aa).

The segment covering 57–81 (KKGISSARVKKLKEQRKKGRRRGPG) has biased composition (basic residues). Residues 57–95 (KKGISSARVKKLKEQRKKGRRRGPGSRRGAAGARTPPKE) are disordered.

It belongs to the eukaryotic ribosomal protein eL19 family. Part of the 50S ribosomal subunit.

In terms of biological role, binds to the 23S rRNA. This chain is Large ribosomal subunit protein eL19, found in Methanocaldococcus jannaschii (strain ATCC 43067 / DSM 2661 / JAL-1 / JCM 10045 / NBRC 100440) (Methanococcus jannaschii).